Consider the following 155-residue polypeptide: Effector protein PevD1 (155 aa).

The N-terminal stretch at 1-18 is a signal peptide; the sequence is MQFTLAAAAALFGASALA. An AA1-like domain is found at 33–148; that stretch reads NMYENIDIAD…NPTTIVIDSL (116 aa). Intrachain disulfides connect Cys-70–Cys-84 and Cys-125–Cys-135.

Monomer. Interacts with Arabidopsis thaliana NRP.

The protein localises to the secreted. Its function is as follows. Effector protein. Elicits a hypersensitive response (HR) in tobacco plants (N.tabacum) and cotton (G.hirsutum). Boosts systemic acquired resistance (SAR) to tobacco mosaic virus (TMV) infection in N.tabacum and to V.dhaliae infection in primed cotton seedlings. This Verticillium dahliae (Verticillium wilt) protein is Effector protein PevD1.